The following is a 134-amino-acid chain: Histone H2A.Z (134 aa).

The interval 1 to 31 is disordered; sequence MSGKAHGGKGKSGAKDSGSLRSQSSSARAGL. Serine 2 carries the N-acetylserine modification. Lysine 4, lysine 9, lysine 11, and lysine 15 each carry N6-acetyllysine. The segment covering 15–31 has biased composition (low complexity); that stretch reads KDSGSLRSQSSSARAGL. The interaction with VPS72 stretch occupies residues 98–108; sequence GDDELDSLIRA.

It belongs to the histone H2A family. In terms of assembly, the nucleosome is a histone octamer containing two molecules each of H2A, H2B, H3 and H4 assembled in one H3-H4 heterotetramer and two H2A-H2B heterodimers. The octamer wraps approximately 147 bp of DNA. H2A or its variant H2A.Z forms a heterodimer with H2B. H2A.Z associates with the VPS72/SWC2 subunit of the SWR1 chromatin remodeling complex. Also interacts with RBP1/DNA-directed RNA polymerase II largest subunit. Interacts with NAP1. Interacts with MPS3. In terms of processing, acetylated by ESA1, a component of the NuA4 histone acetyltransferase (HAT) complex, and/or by GCN5, a component of the SAGA complex, to form H2A.ZK3Ac, H2A.ZK8Ac, H2A.ZK10Ac and H2A.ZK14Ac once deposited into chromatin. Acetylation is required for function at telomeres. H2A.ZK14Ac is acetylated at the promoters of active genes.

It is found in the nucleus. The protein resides in the chromosome. In terms of biological role, variant histone H2A which can replace H2A in some nucleosomes. Nucleosomes wrap and compact DNA into chromatin, limiting DNA accessibility to the cellular machineries which require DNA as a template. Histones thereby play a central role in transcription regulation, DNA repair, DNA replication and chromosomal stability. DNA accessibility is regulated via a complex set of post-translational modifications of histones, also called histone code, and nucleosome remodeling. This variant is enriched at promoters, it may keep them in a repressed state until the appropriate activation signal is received. Near telomeres, it may counteract gene silencing caused by the spread of heterochromatin proteins. Required for the RNA polymerase II and SPT15/TBP recruitment to the target genes. Involved in chromosome stability. Required to target MPS3 to the inner membrane of the nuclear envelope. This Saccharomyces cerevisiae (strain ATCC 204508 / S288c) (Baker's yeast) protein is Histone H2A.Z.